Consider the following 992-residue polypeptide: RNA-binding protein 12 (992 aa).

One can recognise an RRM 1 domain in the interval 304–379; that stretch reads LYVSVHGMPF…RYVEVSPATE (76 aa). Ser352 and Ser375 each carry phosphoserine. The segment at 393–424 is disordered; it reads QSMGPSGQAHPPPQTLPRSKSPSGQKRSRSRS. Over residues 408-417 the composition is skewed to polar residues; that stretch reads LPRSKSPSGQ. 3 positions are modified to phosphoserine: Ser420, Ser422, and Ser424. Residues 430-507 enclose the RRM 2 domain; it reads FCVYLKGLPF…RFIQVHPITK (78 aa). Ser525 is subject to Phosphoserine. Positions 849–913 are disordered; it reads FGGIPQNFGN…PGFGASSGKP (65 aa). Low complexity predominate over residues 876–887; the sequence is LGSVPGHLSGPP. Positions 916–992 constitute an RRM 3 domain; that stretch reads TIIKVQNMPF…GSRKVKLVLG (77 aa).

The protein resides in the nucleus. The protein is RNA-binding protein 12 (Rbm12) of Mus musculus (Mouse).